Reading from the N-terminus, the 539-residue chain is MSILSMVEDRPTPKEVYNWRIYLLAAVASFTSCMIGYDSAFIGTTISLDSFKNEFHWDSMSTAKQNLVSANIVSCYQAGAFFGAFFAYPIGHFWGRKWGLMLSALVFTLGAGLMLGANGDRGLGLIYGGRVLAGLGVGAGSNFTPIYISELAPPAIRGRLVGVYELGWQVGGLVGFWINYGVEQTMAPSHKQWLIPFAVQLIPAGLLIIGILFVKESPRWLFLRGRREEAIKNLCWIRQIPADHIYMIEEIGAIDQTLEHQRSTIGLGFWRPLKEAWTNKRILYRLFLGSMLFFWQNGSGINAINYYSPTVFKSIGLKGNSSSLLTTGIFGVVKTVVTIVWLLYLIDHVGRRLLLLIGAAGGSICMWIVGAYIKVVDPTHNQSDHLNGGGVAAIFFFYLWTAFYTPSWNGTPWVINSEMFDPNIRSLAQACAAGSNWLWNFLISRFTPQMFAKMDYGVYFFFASLMLLSIPFVFFLVPETKGIPLENMDPLFQTQPVWRAHAKVLAQIHEDEARFRRDLEESGYTKGNVEQVEDTDRKE.

Residues 1 to 22 lie on the Cytoplasmic side of the membrane; that stretch reads MSILSMVEDRPTPKEVYNWRIY. The chain crosses the membrane as a helical span at residues 23-43; that stretch reads LLAAVASFTSCMIGYDSAFIG. Residues 44–74 lie on the Extracellular side of the membrane; it reads TTISLDSFKNEFHWDSMSTAKQNLVSANIVS. Residues 75–95 traverse the membrane as a helical segment; sequence CYQAGAFFGAFFAYPIGHFWG. Over 96–97 the chain is Cytoplasmic; that stretch reads RK. Residues 98 to 118 traverse the membrane as a helical segment; it reads WGLMLSALVFTLGAGLMLGAN. Residues 119–130 are Extracellular-facing; that stretch reads GDRGLGLIYGGR. The helical transmembrane segment at 131-151 threads the bilayer; it reads VLAGLGVGAGSNFTPIYISEL. The Cytoplasmic portion of the chain corresponds to 152–159; sequence APPAIRGR. The chain crosses the membrane as a helical span at residues 160–180; the sequence is LVGVYELGWQVGGLVGFWINY. Residues 181–193 lie on the Extracellular side of the membrane; it reads GVEQTMAPSHKQW. The helical transmembrane segment at 194 to 214 threads the bilayer; that stretch reads LIPFAVQLIPAGLLIIGILFV. Over 215–285 the chain is Cytoplasmic; the sequence is KESPRWLFLR…AWTNKRILYR (71 aa). The helical transmembrane segment at 286 to 306 threads the bilayer; that stretch reads LFLGSMLFFWQNGSGINAINY. Residues 307–325 are Extracellular-facing; it reads YSPTVFKSIGLKGNSSSLL. The helical transmembrane segment at 326–346 threads the bilayer; that stretch reads TTGIFGVVKTVVTIVWLLYLI. The Cytoplasmic segment spans residues 347 to 352; the sequence is DHVGRR. A helical membrane pass occupies residues 353–373; that stretch reads LLLLIGAAGGSICMWIVGAYI. The Extracellular segment spans residues 374–387; it reads KVVDPTHNQSDHLN. The helical transmembrane segment at 388 to 408 threads the bilayer; that stretch reads GGGVAAIFFFYLWTAFYTPSW. Residues 409–456 lie on the Cytoplasmic side of the membrane; the sequence is NGTPWVINSEMFDPNIRSLAQACAAGSNWLWNFLISRFTPQMFAKMDY. Residues 457–477 traverse the membrane as a helical segment; that stretch reads GVYFFFASLMLLSIPFVFFLV. Residues 478-539 lie on the Extracellular side of the membrane; it reads PETKGIPLEN…EQVEDTDRKE (62 aa).

This sequence belongs to the major facilitator superfamily. Sugar transporter (TC 2.A.1.1) family. In terms of assembly, interacts with creB. Ubiquitinated. Deubiquitinated by creB, probably to control its activity or amount.

Its subcellular location is the cell membrane. Integral membrane transporter that imports quinic acid to be catabolized as a carbon source. The sequence is that of Probable quinate permease (qutD) from Aspergillus niger (strain ATCC MYA-4892 / CBS 513.88 / FGSC A1513).